The primary structure comprises 150 residues: Large ribosomal subunit protein bL9 (150 aa).

This sequence belongs to the bacterial ribosomal protein bL9 family.

Its function is as follows. Binds to the 23S rRNA. The sequence is that of Large ribosomal subunit protein bL9 from Alkalilimnicola ehrlichii (strain ATCC BAA-1101 / DSM 17681 / MLHE-1).